A 269-amino-acid chain; its full sequence is 4-hydroxy-tetrahydrodipicolinate reductase (269 aa).

NAD(+) is bound by residues 8–13 (GVAGRM), 98–100 (GTT), and 122–125 (APNM). The active-site Proton donor/acceptor is the H156. H157 is a binding site for (S)-2,3,4,5-tetrahydrodipicolinate. K160 serves as the catalytic Proton donor. Residue 166–167 (GT) coordinates (S)-2,3,4,5-tetrahydrodipicolinate.

It belongs to the DapB family.

It is found in the cytoplasm. It catalyses the reaction (S)-2,3,4,5-tetrahydrodipicolinate + NAD(+) + H2O = (2S,4S)-4-hydroxy-2,3,4,5-tetrahydrodipicolinate + NADH + H(+). It carries out the reaction (S)-2,3,4,5-tetrahydrodipicolinate + NADP(+) + H2O = (2S,4S)-4-hydroxy-2,3,4,5-tetrahydrodipicolinate + NADPH + H(+). Its pathway is amino-acid biosynthesis; L-lysine biosynthesis via DAP pathway; (S)-tetrahydrodipicolinate from L-aspartate: step 4/4. Catalyzes the conversion of 4-hydroxy-tetrahydrodipicolinate (HTPA) to tetrahydrodipicolinate. This Chromohalobacter salexigens (strain ATCC BAA-138 / DSM 3043 / CIP 106854 / NCIMB 13768 / 1H11) protein is 4-hydroxy-tetrahydrodipicolinate reductase.